A 334-amino-acid chain; its full sequence is N-acetyl-gamma-glutamyl-phosphate reductase (334 aa).

The active site involves Cys154.

The protein belongs to the NAGSA dehydrogenase family. Type 1 subfamily.

The protein localises to the cytoplasm. The catalysed reaction is N-acetyl-L-glutamate 5-semialdehyde + phosphate + NADP(+) = N-acetyl-L-glutamyl 5-phosphate + NADPH + H(+). The protein operates within amino-acid biosynthesis; L-arginine biosynthesis; N(2)-acetyl-L-ornithine from L-glutamate: step 3/4. Functionally, catalyzes the NADPH-dependent reduction of N-acetyl-5-glutamyl phosphate to yield N-acetyl-L-glutamate 5-semialdehyde. The polypeptide is N-acetyl-gamma-glutamyl-phosphate reductase (Shigella flexneri).